Here is a 591-residue protein sequence, read N- to C-terminus: Probable anion transporter 4, chloroplastic (591 aa).

Residues 1 to 38 (MAMGAVLSSRTFASPLSSSGKQHPPQNNKCTCSSPPTR) form a disordered region. The transit peptide at 1 to 76 (MAMGAVLSSR…LSARFHQPVV (76 aa)) directs the protein to the chloroplast. Residues 8–36 (SSRTFASPLSSSGKQHPPQNNKCTCSSPP) are compositionally biased toward polar residues. A run of 11 helical transmembrane segments spans residues 184 to 204 (VVLL…NMSI), 220 to 240 (VGLI…LGGI), 249 to 269 (VVLG…PLAA), 271 to 291 (IGLP…GVAM), 313 to 333 (LVYS…PLLI), 336 to 356 (FGWP…FALW), 402 to 422 (VWAL…LLTW), 440 to 460 (LLCV…GWIA), 475 to 495 (KIMQ…LSKV), 531 to 551 (AGVL…FGTA), and 565 to 585 (VFQV…VFST).

The protein belongs to the major facilitator superfamily. Sodium/anion cotransporter (TC 2.A.1.14) family.

It localises to the plastid. The protein localises to the chloroplast membrane. Probable anion transporter. This Oryza sativa subsp. japonica (Rice) protein is Probable anion transporter 4, chloroplastic (PHT4;4).